A 58-amino-acid polypeptide reads, in one-letter code: MATIKIKQIGSPIRRPESQKKVLIGLGLGKMHRVVEVEDTPEVRGAIAKLPHMVAVVD.

This sequence belongs to the universal ribosomal protein uL30 family. In terms of assembly, part of the 50S ribosomal subunit.

This is Large ribosomal subunit protein uL30 from Novosphingobium aromaticivorans (strain ATCC 700278 / DSM 12444 / CCUG 56034 / CIP 105152 / NBRC 16084 / F199).